Consider the following 261-residue polypeptide: Probable 6-phosphogluconolactonase 4 (261 aa).

The protein belongs to the glucosamine/galactosamine-6-phosphate isomerase family. 6-phosphogluconolactonase subfamily.

It localises to the cytoplasm. The protein resides in the cytosol. It catalyses the reaction 6-phospho-D-glucono-1,5-lactone + H2O = 6-phospho-D-gluconate + H(+). Its pathway is carbohydrate degradation; pentose phosphate pathway; D-ribulose 5-phosphate from D-glucose 6-phosphate (oxidative stage): step 2/3. Catalyzes the hydrolysis of 6-phosphogluconolactone to 6-phosphogluconate. This chain is Probable 6-phosphogluconolactonase 4, found in Arabidopsis thaliana (Mouse-ear cress).